Reading from the N-terminus, the 68-residue chain is Prokaryotic ubiquitin-like protein Pup (68 aa).

A disordered region spans residues 1–37 (MAQERIFGTGSRREDEPDTPAPVDPPVSGAAQAQRDM). Residues 24–62 (DPPVSGAAQAQRDMQGTDDLLAEIDGVLETNAEAFVKGF) are ARC ATPase binding. Glutamine 68 is modified (deamidated glutamine). Glutamine 68 participates in a covalent cross-link: Isoglutamyl lysine isopeptide (Gln-Lys) (interchain with K-? in acceptor proteins).

The protein belongs to the prokaryotic ubiquitin-like protein family. In terms of assembly, strongly interacts with the proteasome-associated ATPase ARC through a hydrophobic interface; the interacting region of Pup lies in its C-terminal half. There is one Pup binding site per ARC hexamer ring. In terms of processing, is modified by deamidation of its C-terminal glutamine to glutamate by the deamidase Dop, a prerequisite to the subsequent pupylation process.

It participates in protein degradation; proteasomal Pup-dependent pathway. Functionally, protein modifier that is covalently attached to lysine residues of substrate proteins, thereby targeting them for proteasomal degradation. The tagging system is termed pupylation. The polypeptide is Prokaryotic ubiquitin-like protein Pup (Kocuria rhizophila (strain ATCC 9341 / DSM 348 / NBRC 103217 / DC2201)).